A 724-amino-acid polypeptide reads, in one-letter code: MDCLCIVTTKKYRYQDEDTPPLEHSPAHLPNQANSPPVIVNTDTLEAPGYELQVNGTEGEMEYEEITLERGNSGLGFSIAGGTDNPHIGDDPSIFITKIIPGGAAAQDGRLRVNDSILFVNEVDVREVTHSAAVEALKEAGSIVRLYVMRRKPPAEKVMEIKLIKGPKGLGFSIAGGVGNQHIPGDNSIYVTKIIEGGAAHKDGRLQIGDKILAVNSVGLEDVMHEDAVAALKNTYDVVYLKVAKPSNAYLSDSYAPPDITTSYSQHLDNEISHSSYLGTDYPTAMTPTSPRRYSPVAKDLLGEEDIPREPRRIVIHRGSTGLGFNIVGGEDGEGIFISFILAGGPADLSGELRKGDQILSVNGVDLRNASHEQAAIALKNAGQTVTIIAQYKPEEYSRFEAKIHDLREQLMNSSLGSGTASLRSNPKRGFYIRALFDYDKTKDCGFLSQALSFRFGDVLHVIDASDEEWWQARRVHSDSETDDIGFIPSKRRVERREWSRLKAKDWGSSSGSQGREDSVLSYETVTQMEVHYARPIIILGPTKDRANDDLLSEFPDKFGSCVPHTTRPKREYEIDGRDYHFVSSREKMEKDIQAHKFIEAGQYNSHLYGTSVQSVREVAEQGKHCILDVSANAVRRLQAAHLHPIAIFIRPRSLENVLEINKRITEEQARKAFDRATKLEQEFTECFSAIVEGDSFEEIYHKVKRVIEDLSGPYIWVPARERL.

S-palmitoyl cysteine attachment occurs at residues Cys3 and Cys5. Positions 15 to 35 (QDEDTPPLEHSPAHLPNQANS) are disordered. PDZ domains lie at 65 to 151 (EITL…VMRR) and 160 to 246 (EIKL…VAKP). Residues Ser73 and Ser142 each carry the phosphoserine modification. At Tyr240 the chain carries Phosphotyrosine. Ser295 is modified (phosphoserine). Residues 313-393 (RIVIHRGSTG…QTVTIIAQYK (81 aa)) enclose the PDZ 3 domain. Ser415 and Ser418 each carry phosphoserine. Thr420 carries the phosphothreonine modification. Ser422, Ser425, Ser449, and Ser480 each carry phosphoserine. The region spanning 428-498 (KRGFYIRALF…PSKRRVERRE (71 aa)) is the SH3 domain. The 176-residue stretch at 534–709 (ARPIIILGPT…IYHKVKRVIE (176 aa)) folds into the Guanylate kinase-like domain. Residue Tyr580 is modified to Phosphotyrosine. 2 positions are modified to phosphoserine: Ser606 and Ser654. Position 715 is a phosphotyrosine (Tyr715).

It belongs to the MAGUK family. Interacts through its PDZ domains with ANO2 and NETO1. Interacts through its first two PDZ domains with GRIN2A, GRIN2B, GRIN2C, GRIN2D. Interacts with ASIC3. Interacts with SEMA4C. Interacts with CXADR. Interacts with KCND2. Interacts with SYNGAP1. Interacts with LRRC4 and LRRC4B. Interacts with ERBB4. Interacts with KCNA1, KCNA2, KCNA3 and KCNA4. Interacts through its first PDZ domain with GRIK2, KCNA4 and CRIPT. Interacts through its second PDZ domain with the PDZ domain of NOS1 or the C-terminus of CAPON. Interacts through its third PDZ domain with NLGN1 and CRIPT, and probably with NLGN2 and NLGN3. Interacts through its guanylate kinase-like domain with KIF13B. Interacts through its guanylate kinase-like domain with DLGAP1/GKAP, DLGAP2, DLGAP3, DLGAP4, MAP1A, BEGAIN and SIPA1L1. Isoform 2 interacts through an L27 domain with HGS/HRS and the first L27 domain of CASK. Interacts with ADR1B and ANKS1B. May interact with HTR2A. Interacts with ADAM22. Interacts with KLHL17 and LGI1. Interacts with FRMPD4 (via C-terminus). Interacts with LRFN1, LRFN2 and LRFN4. Interacts (via N-terminal tandem pair of PDZ domains) with GPER1 (via C-terminus tail motif); the interaction is direct and induces the increase of GPER1 protein levels residing at the plasma membrane surface in a estradiol-independent manner. Interacts (via N-terminus tandem pair of PDZ domains) with NOS1 (via N-terminal domain). Interacts with SHANK3. Interacts with KCNJ4. Interacts with GPR85. Interacts with CACNG2 and MPP2 (via the SH3-Guanylate kinase-like sub-module). Interacts with ADGRB1. Found in a complex with PRR7 and GRIN1. Interacts (via PDZ3 domain and to lesser degree via PDZ2 domain) with PRR7. Component of the postsynaptic hippocampal AMPA-type glutamate receptor (AMPAR) complex, at least composed of pore forming AMPAR subunits GRIA1, GRIA2 and GRIA3 and AMPAR auxiliary proteins SHISA6 and SHISA7. Interacts (via its first two PDZ domains) with SHISA6 and SHISA7 (via PDZ-binding motif); the interaction is direct. Interacts with RPH3A and GRIN2A; this ternary complex regulates NMDA receptor composition at postsynaptic membranes. Interacts with ABR and BCR. Interacts with DGKI (via PDZ-binding motif); controls the localization of DGKI to the synapse. Interacts with C9orf72, SMCR8 and RAB39B. Interacts with ZDHHC5. Interacts with PTEN (via PDZ domain-binding motif); the interaction is induced by NMDA and is required for PTEN location at postsynaptic density. Found in a complex with GRIA1, GRIA2, GRIA3, GRIA4, CACNG8 and CNIH2. Interacts with FAM81A; the interaction facilitates condensate formation via liquid-liquid phase separation. Interacts with ADGRL3. Interacts with SORCS3. Post-translationally, palmitoylated. Palmitoylation is required for targeting to postsynaptic density, plasma membrane and synapses. Palmitoylation by ZDHHC2 occurs when the synaptic activity decreases and induces DLG4 synaptic clustering. Palmitoylation by ZDHHC15 regulates trafficking to the postsynaptic density and function in synaptogenesis. Palmitoylation may play a role in glutamate receptor GRIA1 synapse clustering. Depalmitoylated by ABHD17A and ABHD17B and to a lesser extent by ABHD17C, ABHD12, ABHD13, LYPLA1 and LYPLA2. Undergoes rapid synaptic palmitoylation/depalmitoylation cycles during neuronal development which slow down in mature neurons. In terms of processing, ubiquitinated by MDM2 in response to NMDA receptor activation, leading to proteasome-mediated degradation of DLG4 which is required for AMPA receptor endocytosis. As to expression, brain.

It is found in the cell membrane. Its subcellular location is the postsynaptic density. The protein resides in the synapse. The protein localises to the cytoplasm. It localises to the cell projection. It is found in the axon. Its subcellular location is the dendritic spine. The protein resides in the dendrite. The protein localises to the presynapse. Functionally, postsynaptic scaffolding protein that plays a critical role in synaptogenesis and synaptic plasticity by providing a platform for the postsynaptic clustering of crucial synaptic proteins. Interacts with the cytoplasmic tail of NMDA receptor subunits and shaker-type potassium channels. Required for synaptic plasticity associated with NMDA receptor signaling. Overexpression or depletion of DLG4 changes the ratio of excitatory to inhibitory synapses in hippocampal neurons. May reduce the amplitude of ASIC3 acid-evoked currents by retaining the channel intracellularly. May regulate the intracellular trafficking of ADR1B. Also regulates AMPA-type glutamate receptor (AMPAR) immobilization at postsynaptic density keeping the channels in an activated state in the presence of glutamate and preventing synaptic depression. Under basal conditions, cooperates with FYN to stabilize palmitoyltransferase ZDHHC5 at the synaptic membrane through FYN-mediated phosphorylation of ZDHHC5 and its subsequent inhibition of association with endocytic proteins. This chain is Disks large homolog 4, found in Homo sapiens (Human).